The chain runs to 312 residues: Light-independent protochlorophyllide reductase iron-sulfur ATP-binding protein (312 aa).

ATP is bound by residues Gly55–Thr60 and Lys84. Ser59 is a binding site for Mg(2+). [4Fe-4S] cluster is bound by residues Cys140 and Cys174. ATP is bound by residues Asn225–Arg226 and Pro249–Leu251.

It belongs to the NifH/BchL/ChlL family. As to quaternary structure, homodimer. Protochlorophyllide reductase is composed of three subunits; BchL, BchN and BchB. The cofactor is [4Fe-4S] cluster.

It carries out the reaction chlorophyllide a + oxidized 2[4Fe-4S]-[ferredoxin] + 2 ADP + 2 phosphate = protochlorophyllide a + reduced 2[4Fe-4S]-[ferredoxin] + 2 ATP + 2 H2O. Its pathway is porphyrin-containing compound metabolism; bacteriochlorophyll biosynthesis (light-independent). Its function is as follows. Component of the dark-operative protochlorophyllide reductase (DPOR) that uses Mg-ATP and reduced ferredoxin to reduce ring D of protochlorophyllide (Pchlide) to form chlorophyllide a (Chlide). This reaction is light-independent. The L component serves as a unique electron donor to the NB-component of the complex, and binds Mg-ATP. This is Light-independent protochlorophyllide reductase iron-sulfur ATP-binding protein from Rhodopseudomonas palustris (strain ATCC BAA-98 / CGA009).